The chain runs to 1077 residues: ATP-dependent DNA helicase MPH1 (1077 aa).

Residues 99-266 (IVHRALFENV…EVVDNLQISK (168 aa)) enclose the Helicase ATP-binding domain. 112–119 (IPTGMGKT) provides a ligand contact to ATP. Positions 214 to 217 (DEAH) match the DEAH box motif. A Helicase C-terminal domain is found at 511–660 (KKVDRIRRLE…SLNYKVTDRI (150 aa)). Disordered stretches follow at residues 536-556 (EKLARTARRTGSSEEAQISGM) and 831-859 (TLSSDNKSTPDQLKRSQSDNGFGIPPKRQ). A compositionally biased stretch (polar residues) spans 831 to 841 (TLSSDNKSTPD).

This sequence belongs to the DEAD box helicase family. DEAH subfamily. FANCM sub-subfamily. Interacts with the MHF histone-fold complex to form the FANCM-MHF complex.

Its subcellular location is the nucleus. It carries out the reaction ATP + H2O = ADP + phosphate + H(+). ATP-dependent DNA helicase involved in DNA damage repair by homologous recombination and in genome maintenance. Capable of unwinding D-loops. Plays a role in limiting crossover recombinants during mitotic DNA double-strand break (DSB) repair. Component of a FANCM-MHF complex which promotes gene conversion at blocked replication forks, probably by reversal of the stalled fork. This chain is ATP-dependent DNA helicase MPH1, found in Eremothecium gossypii (strain ATCC 10895 / CBS 109.51 / FGSC 9923 / NRRL Y-1056) (Yeast).